Here is a 138-residue protein sequence, read N- to C-terminus: Small ribosomal subunit protein uS11c (138 aa).

It belongs to the universal ribosomal protein uS11 family. In terms of assembly, part of the 30S ribosomal subunit.

The protein resides in the plastid. The protein localises to the chloroplast. This chain is Small ribosomal subunit protein uS11c, found in Phalaenopsis aphrodite subsp. formosana (Moth orchid).